A 207-amino-acid chain; its full sequence is Thymidylate kinase (207 aa).

12–19 (GVDGAGKS) is a binding site for ATP.

The protein belongs to the thymidylate kinase family.

It catalyses the reaction dTMP + ATP = dTDP + ADP. Phosphorylation of dTMP to form dTDP in both de novo and salvage pathways of dTTP synthesis. This is Thymidylate kinase from Bordetella petrii (strain ATCC BAA-461 / DSM 12804 / CCUG 43448).